We begin with the raw amino-acid sequence, 243 residues long: Uba3-binding protein but1 (243 aa).

The interval 28 to 50 (KSTKKRRSSTKDEETRGMHPHIK) is disordered.

In terms of assembly, homodimer. Interacts with but2 and uba3.

The protein resides in the nucleus. Its function is as follows. Acts as a negative regulator of the NEDD8 pathway. Has a role in meiosis. This chain is Uba3-binding protein but1 (but1), found in Schizosaccharomyces pombe (strain 972 / ATCC 24843) (Fission yeast).